The chain runs to 172 residues: 3-phenylpropionate/cinnamic acid dioxygenase subunit beta (172 aa).

The protein belongs to the bacterial ring-hydroxylating dioxygenase beta subunit family. In terms of assembly, this dioxygenase system consists of four proteins: the two subunits of the hydroxylase component (HcaE and HcaF), a ferredoxin (HcaC) and a ferredoxin reductase (HcaD).

The enzyme catalyses 3-phenylpropanoate + NADH + O2 + H(+) = 3-(cis-5,6-dihydroxycyclohexa-1,3-dien-1-yl)propanoate + NAD(+). The catalysed reaction is (E)-cinnamate + NADH + O2 + H(+) = (2E)-3-(cis-5,6-dihydroxycyclohexa-1,3-dien-1-yl)prop-2-enoate + NAD(+). It participates in aromatic compound metabolism; 3-phenylpropanoate degradation. In terms of biological role, part of the multicomponent 3-phenylpropionate dioxygenase. Converts 3-phenylpropionic acid (PP) and cinnamic acid (CI) into 3-phenylpropionate-dihydrodiol (PP-dihydrodiol) and cinnamic acid-dihydrodiol (CI-dihydrodiol), respectively. The sequence is that of 3-phenylpropionate/cinnamic acid dioxygenase subunit beta from Shigella sonnei (strain Ss046).